A 188-amino-acid polypeptide reads, in one-letter code: Tuftelin (188 aa).

A coiled-coil region spans residues 1 to 181 (SLRKTVQDLL…DRMEHLIEKQ (181 aa)).

It belongs to the tuftelin family. In terms of assembly, interacts with TFIP11.

The protein resides in the secreted. Functionally, involved in the structural organization of the epidermis. Involved in the mineralization and structural organization of enamel. This is Tuftelin (TUFT1) from Sus scrofa (Pig).